Reading from the N-terminus, the 219-residue chain is Ribosomal RNA large subunit methyltransferase E (219 aa).

Positions 60, 62, 80, 96, and 120 each coordinate S-adenosyl-L-methionine. Catalysis depends on Lys-160, which acts as the Proton acceptor.

This sequence belongs to the class I-like SAM-binding methyltransferase superfamily. RNA methyltransferase RlmE family.

The protein localises to the cytoplasm. It carries out the reaction uridine(2552) in 23S rRNA + S-adenosyl-L-methionine = 2'-O-methyluridine(2552) in 23S rRNA + S-adenosyl-L-homocysteine + H(+). Functionally, specifically methylates the uridine in position 2552 of 23S rRNA at the 2'-O position of the ribose in the fully assembled 50S ribosomal subunit. The chain is Ribosomal RNA large subunit methyltransferase E from Acidithiobacillus ferrooxidans (strain ATCC 23270 / DSM 14882 / CIP 104768 / NCIMB 8455) (Ferrobacillus ferrooxidans (strain ATCC 23270)).